The sequence spans 237 residues: Small ribosomal subunit protein uS3 (237 aa).

Residues 39–107 (IRAYLMEELK…ETHLNIVEVR (69 aa)) form the KH type-2 domain. The disordered stretch occupies residues 213–237 (MASERRATESDNQGGSGRERRRENA).

This sequence belongs to the universal ribosomal protein uS3 family. As to quaternary structure, part of the 30S ribosomal subunit. Forms a tight complex with proteins S10 and S14.

Functionally, binds the lower part of the 30S subunit head. Binds mRNA in the 70S ribosome, positioning it for translation. This is Small ribosomal subunit protein uS3 from Rhizobium meliloti (strain 1021) (Ensifer meliloti).